We begin with the raw amino-acid sequence, 242 residues long: Probable transcriptional regulatory protein NGK_1508 (242 aa).

Belongs to the TACO1 family.

Its subcellular location is the cytoplasm. The protein is Probable transcriptional regulatory protein NGK_1508 of Neisseria gonorrhoeae (strain NCCP11945).